Consider the following 422-residue polypeptide: Tyrosine--tRNA ligase (422 aa).

Position 35 (Tyr-35) interacts with L-tyrosine. Positions 40–49 (PTAASLHVGH) match the 'HIGH' region motif. Positions 169 and 173 each coordinate L-tyrosine. A 'KMSKS' region motif is present at residues 229–233 (KFGKT). Lys-232 contributes to the ATP binding site. Residues 352–418 (VRLAQLFADT…GKKSLASVAV (67 aa)) enclose the S4 RNA-binding domain.

This sequence belongs to the class-I aminoacyl-tRNA synthetase family. TyrS type 1 subfamily. Homodimer.

Its subcellular location is the cytoplasm. The catalysed reaction is tRNA(Tyr) + L-tyrosine + ATP = L-tyrosyl-tRNA(Tyr) + AMP + diphosphate + H(+). Catalyzes the attachment of tyrosine to tRNA(Tyr) in a two-step reaction: tyrosine is first activated by ATP to form Tyr-AMP and then transferred to the acceptor end of tRNA(Tyr). In Kineococcus radiotolerans (strain ATCC BAA-149 / DSM 14245 / SRS30216), this protein is Tyrosine--tRNA ligase.